The chain runs to 37 residues: Calcitonin gene-related peptide 1 (37 aa).

A disulfide bond links C2 and C7. F37 is modified (phenylalanine amide).

The protein belongs to the calcitonin family.

The protein resides in the secreted. Its function is as follows. CGRP1/CALCA is a peptide hormone that induces vasodilation mediated by the CALCRL-RAMP1 receptor complex. Dilates a variety of vessels including the coronary, cerebral and systemic vasculature. Its abundance in the CNS also points toward a neurotransmitter or neuromodulator role. It also elevates platelet cAMP. CGRP1 can also bind and activate CALCR-RAMP1 (AMYR1) receptor complex. The protein is Calcitonin gene-related peptide 1 (CALCA) of Sus scrofa (Pig).